The chain runs to 328 residues: Cysteine proteinase COT44 (328 aa).

Positions 1–99 (MSIYLRWSLE…KYSAAVNVDE (99 aa)) are cleaved as a propeptide — activation peptide. N-linked (GlcNAc...) asparagine glycosylation is found at asparagine 48 and asparagine 60. Intrachain disulfides connect cysteine 121–cysteine 163, cysteine 155–cysteine 196, and cysteine 254–cysteine 305. Cysteine 124 is an active-site residue. Residues histidine 260 and asparagine 280 contribute to the active site.

The protein belongs to the peptidase C1 family. In terms of tissue distribution, present in both cotyledons and axes.

May function in an early event in cortical cell differentiation. The sequence is that of Cysteine proteinase COT44 from Brassica napus (Rape).